The following is a 123-amino-acid chain: ATP synthase epsilon chain (123 aa).

This sequence belongs to the ATPase epsilon chain family. As to quaternary structure, F-type ATPases have 2 components, CF(1) - the catalytic core - and CF(0) - the membrane proton channel. CF(1) has five subunits: alpha(3), beta(3), gamma(1), delta(1), epsilon(1). CF(0) has three main subunits: a, b and c.

Its subcellular location is the cell inner membrane. Produces ATP from ADP in the presence of a proton gradient across the membrane. The protein is ATP synthase epsilon chain of Helicobacter pylori (strain G27).